The following is a 100-amino-acid chain: UPF0125 protein HD_1828 (100 aa).

The protein belongs to the UPF0125 (RnfH) family.

In Haemophilus ducreyi (strain 35000HP / ATCC 700724), this protein is UPF0125 protein HD_1828.